Consider the following 311-residue polypeptide: Protoheme IX farnesyltransferase (311 aa).

8 consecutive transmembrane segments (helical) span residues 30 to 50 (VVQL…PGWP), 55 to 75 (WGVA…AAAF), 108 to 128 (FAVL…NALT), 129 to 149 (MWLT…LLKP), 153 to 173 (QNIV…WAAM), 182 to 202 (WILC…LALY), 233 to 253 (FVLF…WFYL), and 287 to 307 (IWHL…GPLL).

This sequence belongs to the UbiA prenyltransferase family. Protoheme IX farnesyltransferase subfamily.

The protein resides in the cell inner membrane. The catalysed reaction is heme b + (2E,6E)-farnesyl diphosphate + H2O = Fe(II)-heme o + diphosphate. Its pathway is porphyrin-containing compound metabolism; heme O biosynthesis; heme O from protoheme: step 1/1. Functionally, converts heme B (protoheme IX) to heme O by substitution of the vinyl group on carbon 2 of heme B porphyrin ring with a hydroxyethyl farnesyl side group. The protein is Protoheme IX farnesyltransferase of Methylibium petroleiphilum (strain ATCC BAA-1232 / LMG 22953 / PM1).